Consider the following 307-residue polypeptide: Regulating synaptic membrane exocytosis protein 3 (307 aa).

Residues 86–120 (STETGIAVEMRSRVTRQGSRESTDGSTNSNSSEGT) are disordered. The segment covering 109–119 (DGSTNSNSSEG) has biased composition (polar residues). Residues 155–273 (PMGDVHIAIM…DLSAAVTGWY (119 aa)) form the C2 domain. Residues Ser294 and Ser297 each carry the phosphoserine modification.

As to quaternary structure, binds PPFIA3. Does not bind RAB3.

The protein resides in the synapse. Regulates synaptic membrane exocytosis. In Mus musculus (Mouse), this protein is Regulating synaptic membrane exocytosis protein 3 (Rims3).